The chain runs to 407 residues: DAZ-associated protein 1 (407 aa).

Methionine 1 is subject to N-acetylmethionine. RRM domains lie at 10-97 and 113-190; these read GKLF…RTRP and NKIF…RAEP. The disordered stretch occupies residues 74–117; it reads TLDGRNIDPKPCTPRGMQPERTRPKEGWQKGPRSDNSKSNKIFV. Over residues 91–111 the composition is skewed to basic and acidic residues; sequence QPERTRPKEGWQKGPRSDNSK. An N6-acetyllysine modification is found at lysine 150. Basic and acidic residues predominate over residues 185–194; that stretch reads VKRAEPRDSK. Residues 185 to 407 are disordered; that stretch reads VKRAEPRDSK…NVQGFHPYRR (223 aa). Positions 195-207 are enriched in polar residues; that stretch reads SQAPGQPGASQWG. The segment covering 247–262 has biased composition (pro residues); it reads GPPPAGRGAPPPPPPF. An Omega-N-methylarginine modification is found at arginine 253. Low complexity predominate over residues 280–294; it reads FPQGYGAPPQFSFGY. The span at 295–315 shows a compositional bias: pro residues; that stretch reads GPPPPPPDQFAPPGVPPPPAT. A compositionally biased stretch (low complexity) spans 364–379; sequence SDPSQQPPSYGGPSVP. The span at 380–393 shows a compositional bias: gly residues; sequence GSGGPPAGGSGFGR.

Interacts with DAZ and DAZL. Acetylation at Lys-150 is predominantly observed in the nuclear fraction, and may regulate nucleocytoplasmic transport. In terms of tissue distribution, mainly expressed in testis. Expressed to a lower level in thymus. Weakly or not expressed in heart, liver, brain, placenta, lung, skeletal muscle, kidney and pancreas.

It is found in the cytoplasm. The protein resides in the nucleus. Its function is as follows. RNA-binding protein, which may be required during spermatogenesis. The protein is DAZ-associated protein 1 (DAZAP1) of Homo sapiens (Human).